A 283-amino-acid chain; its full sequence is Thymidylate synthase (283 aa).

Arginine 22 contacts dUMP. The active-site Nucleophile is cysteine 160. Residues 180–183 (RSCD), asparagine 191, and 221–223 (HIY) each bind dUMP. Aspartate 183 is a binding site for (6R)-5,10-methylene-5,6,7,8-tetrahydrofolate. Serine 282 is a binding site for (6R)-5,10-methylene-5,6,7,8-tetrahydrofolate.

Belongs to the thymidylate synthase family. Bacterial-type ThyA subfamily. In terms of assembly, homodimer.

The protein resides in the cytoplasm. It catalyses the reaction dUMP + (6R)-5,10-methylene-5,6,7,8-tetrahydrofolate = 7,8-dihydrofolate + dTMP. Its pathway is pyrimidine metabolism; dTTP biosynthesis. Functionally, catalyzes the reductive methylation of 2'-deoxyuridine-5'-monophosphate (dUMP) to 2'-deoxythymidine-5'-monophosphate (dTMP) while utilizing 5,10-methylenetetrahydrofolate (mTHF) as the methyl donor and reductant in the reaction, yielding dihydrofolate (DHF) as a by-product. This enzymatic reaction provides an intracellular de novo source of dTMP, an essential precursor for DNA biosynthesis. In Shewanella halifaxensis (strain HAW-EB4), this protein is Thymidylate synthase.